The chain runs to 372 residues: Ciliary neurotrophic factor receptor subunit alpha (372 aa).

The signal sequence occupies residues 1 to 22 (MAASVPWACCAVLAAAAAAVYT). Positions 27–104 (PQEAPHVQYE…WHLRHQVLLH (78 aa)) constitute an Ig-like C2-type domain. An intrachain disulfide couples cysteine 46 to cysteine 89. 4 N-linked (GlcNAc...) asparagine glycosylation sites follow: asparagine 60, asparagine 70, asparagine 142, and asparagine 190. Fibronectin type-III domains are found at residues 108–205 (PPRE…VKPD) and 206–306 (PPEN…TEEP). A WSXWS motif motif is present at residues 290-294 (WSDWS). Residues 301-338 (PWTEEPRHLTTEAQAPETTTSTTSSLAPPPTTKICDPG) form a disordered region. Over residues 311 to 326 (TEAQAPETTTSTTSSL) the composition is skewed to low complexity. Serine 342 carries GPI-anchor amidated serine lipidation. A propeptide spans 343–372 (GGGPSILFLTSVPVTLVLAAAAATANNLLI) (removed in mature form).

Belongs to the type I cytokine receptor family. Type 3 subfamily. In terms of assembly, forms a heterotrimer with LIFR and IL6ST. Interacts with heterodimeric neurotropic cytokine composed of CLCF1/CLC and CRLF1/CLF-1. Either alone or in complex with the heterodimer CLCF1-CRLF1 interacts with SORL1; this interaction may promote internalization and lysosomal degradation.

The protein localises to the cell membrane. In terms of biological role, binds to CNTF. The alpha subunit provides the receptor specificity. This chain is Ciliary neurotrophic factor receptor subunit alpha (Cntfr), found in Mus musculus (Mouse).